Reading from the N-terminus, the 295-residue chain is Maintenance of mitochondrial morphology protein 1 (295 aa).

Topologically, residues 1–12 (MVQLFHLTFTQG) are lumenal. Residues 13–33 (FFIGQLSVIVIVYIFLRFFLF) traverse the membrane as a helical segment. Topologically, residues 34 to 295 (CTKEELKNVQ…REGHRQKSTE (262 aa)) are cytoplasmic. In terms of domain architecture, SMP-LTD spans 81 to 278 (EEESLDWFNV…SPQFQQISIP (198 aa)).

This sequence belongs to the MMM1 family. In terms of assembly, homodimer. Component of the ER-mitochondria encounter structure (ERMES) or MDM complex, composed of mmm1, mdm10, mdm12 and mdm34. A mmm1 homodimer associates with one molecule of mdm12 on each side in a pairwise head-to-tail manner, and the SMP-LTD domains of mmm1 and mdm12 generate a continuous hydrophobic tunnel for phospholipid trafficking.

The protein localises to the endoplasmic reticulum membrane. Component of the ERMES/MDM complex, which serves as a molecular tether to connect the endoplasmic reticulum (ER) and mitochondria. Components of this complex are involved in the control of mitochondrial shape and protein biogenesis, and function in nonvesicular lipid trafficking between the ER and mitochondria. The mdm12-mmm1 subcomplex functions in the major beta-barrel assembly pathway that is responsible for biogenesis of all outer membrane beta-barrel proteins, and acts in a late step after the SAM complex. The mdm10-mdm12-mmm1 subcomplex further acts in the TOM40-specific pathway after the action of the mdm12-mmm1 complex. Essential for establishing and maintaining the structure of mitochondria and maintenance of mtDNA nucleoids. In Schizosaccharomyces japonicus (strain yFS275 / FY16936) (Fission yeast), this protein is Maintenance of mitochondrial morphology protein 1.